Here is a 296-residue protein sequence, read N- to C-terminus: Lipoyl synthase (296 aa).

Positions 37, 42, 48, 63, 67, 70, and 276 each coordinate [4Fe-4S] cluster. The Radical SAM core domain occupies 49 to 265 (WSKKHTTVMI…ERVAKTKGFL (217 aa)).

The protein belongs to the radical SAM superfamily. Lipoyl synthase family. [4Fe-4S] cluster serves as cofactor.

Its subcellular location is the cytoplasm. It carries out the reaction [[Fe-S] cluster scaffold protein carrying a second [4Fe-4S](2+) cluster] + N(6)-octanoyl-L-lysyl-[protein] + 2 oxidized [2Fe-2S]-[ferredoxin] + 2 S-adenosyl-L-methionine + 4 H(+) = [[Fe-S] cluster scaffold protein] + N(6)-[(R)-dihydrolipoyl]-L-lysyl-[protein] + 4 Fe(3+) + 2 hydrogen sulfide + 2 5'-deoxyadenosine + 2 L-methionine + 2 reduced [2Fe-2S]-[ferredoxin]. Its pathway is protein modification; protein lipoylation via endogenous pathway; protein N(6)-(lipoyl)lysine from octanoyl-[acyl-carrier-protein]: step 2/2. In terms of biological role, catalyzes the radical-mediated insertion of two sulfur atoms into the C-6 and C-8 positions of the octanoyl moiety bound to the lipoyl domains of lipoate-dependent enzymes, thereby converting the octanoylated domains into lipoylated derivatives. The protein is Lipoyl synthase of Rickettsia massiliae (strain Mtu5).